The chain runs to 379 residues: MKTLPITRYRFFQKIQPLSLLKKITGKTITGCLQVFSTSGTWSIYVEEGKLIYACYSERMFEPLYRHLGNLSPQIATLPKEINEQLRAIFETGIENQAIPNPDYLAICWLVNQKYISSSQAAVLIEQLALEVVESFLMLEEGSYEFIPESFLDDLPKFCYLNVRLLVEQCQQHGRVPEAFRREASSQEISSSTEHNQIPVNNRRSTKFTSPPHTQPKPEPRLPQINTNKSTEYSKRYASQPNTVNHGYSQTSATSTDKKIYTIFCIDENPIVLNNIKNFLDDQIFAVIGVTDSLKALMEILCTKPDIILINVDMPDLDGYELCSLLRKHSYFKNTPVIMVTEKAGLVDRARAKIVRASGHLTKPFNQGDLLKVIFKHIT.

Positions 181–226 (RREASSQEISSSTEHNQIPVNNRRSTKFTSPPHTQPKPEPRLPQIN) are disordered. The span at 186-212 (SQEISSSTEHNQIPVNNRRSTKFTSPP) shows a compositional bias: polar residues. Residues 262–378 (TIFCIDENPI…DLLKVIFKHI (117 aa)) enclose the Response regulatory domain. At D313 the chain carries 4-aspartylphosphate.

The protein resides in the cell septum. In terms of biological role, controls heterocyst pattern formation. Required for the differentiation of intercalary heterocysts but not for terminal heterocysts. This Nostoc sp. (strain PCC 7120 / SAG 25.82 / UTEX 2576) protein is Protein PatA (patA).